Here is a 246-residue protein sequence, read N- to C-terminus: NADH-quinone oxidoreductase subunit C (246 aa).

The protein belongs to the complex I 30 kDa subunit family. NDH-1 is composed of 14 different subunits. Subunits NuoB, C, D, E, F, and G constitute the peripheral sector of the complex.

It is found in the cell inner membrane. The enzyme catalyses a quinone + NADH + 5 H(+)(in) = a quinol + NAD(+) + 4 H(+)(out). Functionally, NDH-1 shuttles electrons from NADH, via FMN and iron-sulfur (Fe-S) centers, to quinones in the respiratory chain. The immediate electron acceptor for the enzyme in this species is believed to be ubiquinone. Couples the redox reaction to proton translocation (for every two electrons transferred, four hydrogen ions are translocated across the cytoplasmic membrane), and thus conserves the redox energy in a proton gradient. This Halorhodospira halophila (strain DSM 244 / SL1) (Ectothiorhodospira halophila (strain DSM 244 / SL1)) protein is NADH-quinone oxidoreductase subunit C.